The chain runs to 210 residues: Tetraspanin-31 (210 aa).

Topologically, residues 1-12 are cytoplasmic; it reads MVCGGFACSRNA. Residues 13–33 form a helical membrane-spanning segment; sequence LCALNVVYMLVGFLLIGVAAW. The Extracellular segment spans residues 34-44; sequence GKGLGVVSSIH. Residues 45–65 form a helical membrane-spanning segment; the sequence is IIGGVIAVGVFLLLIAVAGLV. The Cytoplasmic portion of the chain corresponds to 66–72; the sequence is GAANHHQ. The helical transmembrane segment at 73-93 threads the bilayer; the sequence is VLLFFYMIILGLVFIFQFGIS. At 94-173 the chain is on the extracellular side; it reads CSCLAINRNT…FLKHSDKALK (80 aa). N-linked (GlcNAc...) asparagine glycans are attached at residues Asn-109, Asn-117, and Asn-134. The chain crosses the membrane as a helical span at residues 174-194; that stretch reads ILGGVGLFFSFTEILGVWLAM. The Cytoplasmic portion of the chain corresponds to 195-210; sequence RFRNQKDPRANPSAFL.

Belongs to the tetraspanin (TM4SF) family.

The protein resides in the membrane. The polypeptide is Tetraspanin-31 (Tspan31) (Mus musculus (Mouse)).